A 96-amino-acid chain; its full sequence is uncharacterized protein (96 aa).

A signal peptide spans 1 to 30 (MLILSVFCAVFYAFLTAIVANFSLKTLAIG). Residues 31-54 (ATFVKSHLKSNPIPYGDLVADSLD) lie on the Extracellular side of the membrane. A helical transmembrane segment spans residues 55-75 (FGNITPTVTLLFAILIAVLAL). Over 76–96 (KCEFSCSTSAPAGQASGRKVK) the chain is Cytoplasmic.

Its subcellular location is the membrane. This is an uncharacterized protein from Dictyostelium discoideum (Social amoeba).